Here is a 163-residue protein sequence, read N- to C-terminus: Shikimate kinase (163 aa).

10-15 (GVGKTT) lines the ATP pocket. Thr-14 contributes to the Mg(2+) binding site. Asp-28, Arg-52, and Gly-75 together coordinate substrate. Arg-116 serves as a coordination point for ATP. A substrate-binding site is contributed by Arg-134. ATP is bound at residue Arg-151.

This sequence belongs to the shikimate kinase family. As to quaternary structure, monomer. Mg(2+) serves as cofactor.

The protein localises to the cytoplasm. It catalyses the reaction shikimate + ATP = 3-phosphoshikimate + ADP + H(+). It functions in the pathway metabolic intermediate biosynthesis; chorismate biosynthesis; chorismate from D-erythrose 4-phosphate and phosphoenolpyruvate: step 5/7. In terms of biological role, catalyzes the specific phosphorylation of the 3-hydroxyl group of shikimic acid using ATP as a cosubstrate. This is Shikimate kinase from Streptococcus pyogenes serotype M12 (strain MGAS2096).